A 1415-amino-acid polypeptide reads, in one-letter code: DNA-directed RNA polymerase subunit beta' (1415 aa).

Zn(2+) contacts are provided by cysteine 71, cysteine 73, cysteine 86, and cysteine 89. Aspartate 461, aspartate 463, and aspartate 465 together coordinate Mg(2+). The Zn(2+) site is built by cysteine 815, cysteine 889, cysteine 896, and cysteine 899.

Belongs to the RNA polymerase beta' chain family. In terms of assembly, the RNAP catalytic core consists of 2 alpha, 1 beta, 1 beta' and 1 omega subunit. When a sigma factor is associated with the core the holoenzyme is formed, which can initiate transcription. It depends on Mg(2+) as a cofactor. Requires Zn(2+) as cofactor.

The catalysed reaction is RNA(n) + a ribonucleoside 5'-triphosphate = RNA(n+1) + diphosphate. DNA-dependent RNA polymerase catalyzes the transcription of DNA into RNA using the four ribonucleoside triphosphates as substrates. The sequence is that of DNA-directed RNA polymerase subunit beta' from Haemophilus influenzae (strain ATCC 51907 / DSM 11121 / KW20 / Rd).